The sequence spans 902 residues: Protein translocase subunit SecA (902 aa).

ATP-binding positions include Gln-87, 105–109 (GEGKT), and Asp-512. Positions 847-902 (DAERLARQQQLSHLDDQSAAAQEMASQTGDRKIGRNDPCPCGSGKKYKQCHGRLNA) are disordered. Cys-885, Cys-887, Cys-896, and His-897 together coordinate Zn(2+). Basic residues predominate over residues 891–902 (KKYKQCHGRLNA).

This sequence belongs to the SecA family. As to quaternary structure, monomer and homodimer. Part of the essential Sec protein translocation apparatus which comprises SecA, SecYEG and auxiliary proteins SecDF-YajC and YidC. Zn(2+) serves as cofactor.

It localises to the cell inner membrane. Its subcellular location is the cytoplasm. The catalysed reaction is ATP + H2O + cellular proteinSide 1 = ADP + phosphate + cellular proteinSide 2.. Its function is as follows. Part of the Sec protein translocase complex. Interacts with the SecYEG preprotein conducting channel. Has a central role in coupling the hydrolysis of ATP to the transfer of proteins into and across the cell membrane, serving both as a receptor for the preprotein-SecB complex and as an ATP-driven molecular motor driving the stepwise translocation of polypeptide chains across the membrane. This Edwardsiella ictaluri (strain 93-146) protein is Protein translocase subunit SecA.